The primary structure comprises 471 residues: MPSEFSGKHVTVAGLGVSGVPAAKVLHGLGAQVTVVNDGDDERARTQAAELEPLGVTVRLGDGDTLPEGTELIVTAPGWKPTKPLFTAAGQAGVPVWGDVELAWRLRGLNGRKPAPWLAVTGTNGKTTTVQMLASILKAAGLRTAAVGNIGVSLLDAVTGEQEYDVLAVELSSYQLHWAPSLRAHSAAVLNLAPDHLDWHGSMEAYAADKGRIYEGNHVACVYNVADKATEDLVRAADVEEGCRAIGFTLGTPGPSQLGVVEGLLVDRAFVEDRQKNAQELAEVSDVNPPAPHNIANALAAAGLARAFGVSAAAVRDGLRAFTPDAHRIAHVADVDGVAYVDDSKATNTHATEASLAAYESIVWIAGGLAKGATFDELVAGAAKRLRGAVLIGADRALIREALARHAPEVPVVDLDRTDTGAMLQAVQEARRLARPGDTVLLAPACASMDMFTNYNQRGDAFAQAVRELGA.

122-128 (GTNGKTT) lines the ATP pocket.

The protein belongs to the MurCDEF family.

The protein resides in the cytoplasm. It catalyses the reaction UDP-N-acetyl-alpha-D-muramoyl-L-alanine + D-glutamate + ATP = UDP-N-acetyl-alpha-D-muramoyl-L-alanyl-D-glutamate + ADP + phosphate + H(+). It functions in the pathway cell wall biogenesis; peptidoglycan biosynthesis. Cell wall formation. Catalyzes the addition of glutamate to the nucleotide precursor UDP-N-acetylmuramoyl-L-alanine (UMA). The protein is UDP-N-acetylmuramoylalanine--D-glutamate ligase of Streptomyces coelicolor (strain ATCC BAA-471 / A3(2) / M145).